The primary structure comprises 396 residues: Elongation factor Tu (396 aa).

In terms of domain architecture, tr-type G spans 10–206; it reads KPHVNVGTIG…ALDSYIPTPK (197 aa). Positions 19-26 are G1; it reads GHVDHGKT. 19–26 is a binding site for GTP; that stretch reads GHVDHGKT. Thr-26 provides a ligand contact to Mg(2+). The interval 60–64 is G2; that stretch reads GITIS. Positions 81–84 are G3; that stretch reads DCPG. GTP is bound by residues 81 to 85 and 136 to 139; these read DCPGH and NKAD. Residues 136–139 are G4; sequence NKAD. Positions 174–176 are G5; that stretch reads SAL.

It belongs to the TRAFAC class translation factor GTPase superfamily. Classic translation factor GTPase family. EF-Tu/EF-1A subfamily. Monomer.

Its subcellular location is the cytoplasm. It catalyses the reaction GTP + H2O = GDP + phosphate + H(+). Functionally, GTP hydrolase that promotes the GTP-dependent binding of aminoacyl-tRNA to the A-site of ribosomes during protein biosynthesis. This chain is Elongation factor Tu, found in Vesicomyosocius okutanii subsp. Calyptogena okutanii (strain HA).